A 465-amino-acid polypeptide reads, in one-letter code: Lactaldehyde dehydrogenase (465 aa).

220–225 is an NAD(+) binding site; sequence GSVEVG. Residues Glu-240 and Cys-274 contribute to the active site.

This sequence belongs to the aldehyde dehydrogenase family. As to quaternary structure, homotetramer.

The enzyme catalyses (S)-lactaldehyde + NAD(+) + H2O = (S)-lactate + NADH + 2 H(+). It functions in the pathway cofactor biosynthesis; coenzyme F420 biosynthesis. Its function is as follows. Involved in F420 biosynthesis through the oxidation of lactaldehyde to lactate. The protein is Lactaldehyde dehydrogenase of Methanococcus maripaludis (strain DSM 14266 / JCM 13030 / NBRC 101832 / S2 / LL).